The following is a 445-amino-acid chain: Histidinol dehydrogenase (445 aa).

NAD(+) contacts are provided by tyrosine 134, glutamine 198, and asparagine 226. Threonine 249, glutamine 271, and histidine 274 together coordinate substrate. 2 residues coordinate Zn(2+): glutamine 271 and histidine 274. Residues glutamate 340 and histidine 341 each act as proton acceptor in the active site. Positions 341, 374, 428, and 433 each coordinate substrate. A Zn(2+)-binding site is contributed by aspartate 374. Residue histidine 433 coordinates Zn(2+).

It belongs to the histidinol dehydrogenase family. It depends on Zn(2+) as a cofactor.

It carries out the reaction L-histidinol + 2 NAD(+) + H2O = L-histidine + 2 NADH + 3 H(+). It participates in amino-acid biosynthesis; L-histidine biosynthesis; L-histidine from 5-phospho-alpha-D-ribose 1-diphosphate: step 9/9. In terms of biological role, catalyzes the sequential NAD-dependent oxidations of L-histidinol to L-histidinaldehyde and then to L-histidine. The protein is Histidinol dehydrogenase of Nocardia farcinica (strain IFM 10152).